Here is a 406-residue protein sequence, read N- to C-terminus: MTFSVDKVRADFPVLSREVNGLPLAYLDSAASAQKPSQVIDAEAEFYRHGYAAVHRGIHTLSAQATEKMENVRKRASLFINARSAEELVFVRGTTEGINLVANSWGNSNVRAGDNIIISQMEHHANIVPWQMLCARVGAELRVIPLNPDGTLQLETLPTLFDEKTRLLAITHVSNVLGTENPLAEMITLAHQHGAKVLVDGAQAVMHHPVDVQALDCDFYVFSGHKLYGPTGIGILYVKEALLQEMPPWEGGGSMIATVSLSEGTTWTKAPWRFEAGTPNTGGIIGLGAALEYVSALGLNSIAEYEQNLMHYALSQLESVPDLTLYGPQNRLGVIAFNLGKHHAYDVGSFLDNYGIAVRTGHHCAMPLMAYYNVPAMCRASLAMYNTHEEVDRLVTGLQRIHRLLG.

Position 226 is an N6-(pyridoxal phosphate)lysine (Lys-226). Cys-364 serves as the catalytic Cysteine persulfide intermediate.

Belongs to the class-V pyridoxal-phosphate-dependent aminotransferase family. Csd subfamily. As to quaternary structure, homodimer. Interacts with SufE and the SufBCD complex composed of SufB, SufC and SufD. The interaction with SufE is required to mediate the direct transfer of the sulfur atom from the S-sulfanylcysteine. Pyridoxal 5'-phosphate is required as a cofactor.

The protein resides in the cytoplasm. The catalysed reaction is (sulfur carrier)-H + L-cysteine = (sulfur carrier)-SH + L-alanine. The enzyme catalyses L-selenocysteine + AH2 = hydrogenselenide + L-alanine + A + H(+). It functions in the pathway cofactor biosynthesis; iron-sulfur cluster biosynthesis. Cysteine desulfurases mobilize the sulfur from L-cysteine to yield L-alanine, an essential step in sulfur metabolism for biosynthesis of a variety of sulfur-containing biomolecules. Component of the suf operon, which is activated and required under specific conditions such as oxidative stress and iron limitation. Acts as a potent selenocysteine lyase in vitro, that mobilizes selenium from L-selenocysteine. Selenocysteine lyase activity is however unsure in vivo. The sequence is that of Cysteine desulfurase from Escherichia coli (strain SE11).